The sequence spans 269 residues: Probable aquaporin TIP5-1 (269 aa).

Transmembrane regions (helical) follow at residues 19–39, 54–74, 84–104, 139–159, and 177–197; these read AYFA…GSTI, SLMA…FIAA, AVTF…IFYW, FGAG…VHVA, and ALGA…AGSL. The NPA 1 signature appears at 82–84; the sequence is NPA. Positions 203–205 match the NPA 2 motif; it reads NPA. Residues 223–243 form a helical membrane-spanning segment; the sequence is YWAGPMVGAAVAALVHQALVF.

Belongs to the MIP/aquaporin (TC 1.A.8) family. TIP (TC 1.A.8.10) subfamily. Expressed in leaves and anthers, and at lower levels in roots.

Its subcellular location is the vacuole membrane. Aquaporins facilitate the transport of water and small neutral solutes across cell membranes. May be involved in transport from the vacuolar compartment to the cytoplasm. In Oryza sativa subsp. japonica (Rice), this protein is Probable aquaporin TIP5-1 (TIP5;1).